The sequence spans 968 residues: MEFLSTSQSLQINFDSQQSEQIQVPIGFDSSQPPQEFEFETTPLNQLPFLKQIDIAASLSFIPASIENLTTENTITVFPVLVGQGAFSQQDSLLQFPVSLQNININNNNNSNFQLGLVPSSPQSSISSPSTIESNYLSNPSSPCQSTPILESSTPFSQKLMSNEQQQQQQPQNFSFPQKQQQAVDLNEFFGLNSVGGGGHFKACFSPDNSFNLYNDLSPEAKSCFKIFAKKCKPTTEHEVFNKVMNLLNNLTLEEIDLIIKSVSRIEKYDTLIAKVFATELDVANFPSINAKLLLQNLLVEIIDQDRKLVYHLFQLDTDHIHSLKNKCSILSISTPASDSLNFSALLQEDSNNNNNNNNNNNNNNNNNNNNNNNNNNNNNNNNNNNNNNNNNNNNNNYNNNYNNNNNNNNNNNNNNNNNNNNNNNNNNCNNSLVNDSNTNIINHTHNLNYNQNQNQNLNNNYNYDYNFTNDTNNNVYHQNNTSPANNSPYVTPVLKDNELHSQLLPQIAHQQPVAVLANYQHNQQQQSPQQIQQQLYNPHLQILSQQTNSNPHNTENIEVPKIKLQPNFQSTTTTTITQQQQQQQQQQQQQQQNTPLISQLIPESIKPKASNKLANNSNGKKVGSSKKVSKSVFPKGIITPQYFSILKDRFGFTMESLEKASNPNGANYIHSLNGSLALVNTCLVPISSEVSTGRDSKNGVVITVKNYGDYTTKLTLEYELVTSNNEVNDDKFSFKKKNLLMVEPGIFYFQYSMNRIDKNEKEVYIRFNLICEGKVIDSIQSPQIRFRNTPSEFDQPNNVQLETLIADQFKTYSDDHSVHVKFVAIANLFKKGIIPKASKDSSSSPTASSAAPGDSSSDGEGDEQSSTSTKKMKKGKPLEVTLKHSSGFTLVIPQHISKAKPEDIWRFPKNLISQTNIPIKKSEGDIIHFPYSYVVEFSALVPRGNYTITFGYEFVNKKANPIHNFVI.

Disordered regions lie at residues 124-177 (SSIS…FSFP), 348-437 (QEDS…VNDS), 572-595 (TTTT…QQNT), 608-627 (PKAS…GSSK), and 837-877 (KASK…KKGK). Over residues 131–157 (TIESNYLSNPSSPCQSTPILESSTPFS) the composition is skewed to polar residues. Composition is skewed to low complexity over residues 158–177 (QKLM…FSFP), 352–431 (NNNN…NCNN), and 572–593 (TTTT…QQQQ). The span at 841–857 (DSSSSPTASSAAPGDSS) shows a compositional bias: low complexity.

This is an uncharacterized protein from Dictyostelium discoideum (Social amoeba).